The sequence spans 183 residues: Outer membrane protein H.8 (183 aa).

The first 17 residues, 1–17 (MKAYLALISAAVIGLAA), serve as a signal peptide directing secretion. Residue Cys18 is the site of N-palmitoyl cysteine attachment. Cys18 is lipidated: S-diacylglycerol cysteine. Positions 27–51 (AEATPAAEAPASEAPAAEAAPADAA) are disordered. Residues 57 to 183 (GNCAATVESN…LMNGKVTLVD (127 aa)) enclose the Plastocyanin-like domain. His102, Cys166, His171, and Met175 together coordinate Cu cation.

Cu cation serves as cofactor.

Its subcellular location is the cell outer membrane. This is Outer membrane protein H.8 from Neisseria meningitidis serogroup B (strain ATCC BAA-335 / MC58).